We begin with the raw amino-acid sequence, 839 residues long: MDRTAASRPDLYLIADQDTVYEQDLFRAPGSIKPWLAYIEYKQQNGTLYEQAFVMERACKQLPRSYKLWKMYLEFRINHLRGRNATKYRAEYQKVNALFERALILLNKMPKIWEMYLSFLLQQPLVTQTRRTFDRALRALPITQHNRIWKLYKAFARSASGQTAVKIWARYMQIHPENAEDYIELLVELGQYTEAVKRYMEILDDPRFQSKKGKSNFQLWTEMVDLLVSKAKQIRTGPQVGIDVDAILRSGIDRFADQRGKLWAGLATYWITKGNFEKARDVFEEGITTVMTVRDFTLIFDAYVEFEESIIGSLMEAAAVRADKGNVDEDADFDLDLRMLRFEQLMDRRPFLVNDVLLRQNPNNVIEWEKRVALWGDNKEEIVNTYTAAIAAINPKKAHGKFSELWVNYAKFYESGGDLDTARVIFDKAVKVPFKSVAELADTWCEWAEMELRSENFDKAVDIMAKATQAPKKSTVDYFDETLSPQQRVHKSWKLWSFYVDLVESVATLEETRKVYERIFELRIATPQTVVNYANLLEEHKYFEDSFKVYERGLDLFSYPVAFELWNLYLTKAVDRKIGIERLRDLFEQALDGCPPKFAKPLYLMYGNLEEERGLARHAMRIYERATRAVSDEDRFEMFEFYITKSASNFGLTSTRPIYERAIAALPDQEAKEMCLKFADMERRLGEIDRARAIYGHASQFCDPRTNAGFWQKWEAFEVQHGNEDTFKEMLRIKRSVQAQYNTDVNFIASQAIARSQQRAQEGAREREGEEAGTDASKERADAMAALERQARAPIGFVAASTGPEGGNRPPPPGQQQQPQPSAPVNPDAIDLDDDMDAE.

13 HAT repeats span residues 12-44 (YLIA…YKQQ), 46-78 (GTLY…FRIN), 90-122 (AEYQ…FLLQ), 124-158 (PLVT…FARS), 274-309 (GNFE…FEES), 377-415 (DNKE…FYES), 417-453 (GDLD…MELR), 470-502 (APKK…YVDL), 507-539 (ATLE…LLEE), 541-575 (KYFE…KAVD), 578-612 (IGIE…LEEE), 650-684 (FGLT…MERR), and 686-720 (GEID…FEVQ). The tract at residues 758-839 (QRAQEGARER…IDLDDDMDAE (82 aa)) is disordered. A compositionally biased stretch (basic and acidic residues) spans 762 to 782 (EGAREREGEEAGTDASKERAD). Residues 830-839 (IDLDDDMDAE) show a composition bias toward acidic residues.

Belongs to the crooked-neck family. Associated with the spliceosome.

The protein localises to the nucleus. Its function is as follows. Involved in pre-mRNA splicing and cell cycle progression. This chain is Pre-mRNA-splicing factor syf1 (syf1), found in Aspergillus fumigatus (strain ATCC MYA-4609 / CBS 101355 / FGSC A1100 / Af293) (Neosartorya fumigata).